The primary structure comprises 430 residues: MAKIQAIRGTKDILPDEQLYWQFIHEKVASLLKYANYKEIKTPIFENSDLYDRGIGENTDIVNKEMYRFNDRSNRDITLRPEGTAGVVRAFIENRMDVQNRLQKLWYSGPMFRYERPQSGRQRQFHQLGIEFIGSSDARADAEIIHLAMNIFNDLSVNDLQLDINSIGKAEDRNHYQAKLQEYLEQYYDDLDTDSQNRLSSNPIRILDTKNKYTQTILNDSPRISDFLSLESEKHFDDVCDYLTLLNVPYKINTQLVRGLDYYNDTAFEIKILKSQGQDTLCGGGRYDSLIHQLGGNKTPAVGCAIGLERLLLVAKDNILLPHMSIDCYIVSKGIKARKIGIIITQFLRNQLVKTELDISSSNFGKQLKQAHKKRAIACLILGDNEIQQETITIKWMYTQEQENMSIIEFKNKISYLKKKIAFNKKFNSY.

Belongs to the class-II aminoacyl-tRNA synthetase family.

It localises to the plastid. Its subcellular location is the chloroplast. The enzyme catalyses tRNA(His) + L-histidine + ATP = L-histidyl-tRNA(His) + AMP + diphosphate + H(+). This is Histidine--tRNA ligase, chloroplastic (hisS) from Porphyra purpurea (Red seaweed).